A 350-amino-acid chain; its full sequence is Protein pelota homolog (350 aa).

The protein belongs to the eukaryotic release factor 1 family. Pelota subfamily. As to quaternary structure, monomer. A divalent metal cation serves as cofactor.

It localises to the cytoplasm. In terms of biological role, may function in recognizing stalled ribosomes, interact with stem-loop structures in stalled mRNA molecules, and effect endonucleolytic cleavage of the mRNA. May play a role in the release non-functional ribosomes and degradation of damaged mRNAs. Has endoribonuclease activity. This chain is Protein pelota homolog, found in Methanosarcina mazei (strain ATCC BAA-159 / DSM 3647 / Goe1 / Go1 / JCM 11833 / OCM 88) (Methanosarcina frisia).